Consider the following 1765-residue polypeptide: MSARAAAAKSTAMEETAIWEQHTVTLHRAPGFGFGIAISGGRDNPHFQSGETSIVISDVLKGGPAEGQLQENDRVAMVNGVSMDNVEHAFAVQQLRKSGKNAKITIRRKKKVQIPVSHPDPDPVSDNEDDSYDEDVHDPRSGRGALANRRGEKSWARDRSASRDRSLSPRSDRRSVASSQPAKPTKVTLVKSRKNEEYGLRLASHIFVKEISQDSLAARDGNIQEGDVVLKINGTVTENMSLTDAKTLIERSKGKLKMVVQRDERATLLNVPDLSDSIHSANASERDDISEIQSLASDHSVRSHDRPPRRSQSRSPDQRSEPSDHSTQSPQQPSNGSLRSREEERMSKPGAVSTPVKHVDDHTPKAVEEVTVEKHEKQTPTLPEPKPVYAQVGQPDVDLPVSPSDGVLPNSTHEDGILRPSMKLVKFRKGDSVGLRLAGGNDVGIFVAGVLEDSPAAKEGLEEGDQILRVNNVDFTNIIREEAVLFLLDLPKGEEVTILAQKKKDVYRRIVESDVGDSFYIRTHFEYEKESPYGLSFNKGEVFRVVDTLYNGKLGSWLAIRIGKNHKEVERGIVPNKNRAEQLASVQYTLPKTAGGDRADFWRFRGLRSSKRNLRKSREDLSAQPVQTKFPAYERVVLREAGFLRPVTIFGPIADVAREKLAREEPDIYQIAKSEPRDAGTDHRSSGIIRLHTIKQIIDQDKHALLDVTPNAVDRLNYAQWYPIVVFLNPDSKQGVKTMRMRLCPESRKSARKLYERSHKLRKNNHHLFTTTINLNSMNDGWYGALKEAIQQQQNQLVWVSEGKADGATSDDLDLHDDRLSYLSAPGSEYSMYSTDSRHTSDYEDTDTEGGAYTDQELDETLNDEVGTPPESAITRSSEPVREDSSGMHHENQTYPPYSPQAQPQAIHRIDSPGLKTASQQKAEASSPVPYLSPETNPASSASAVKHNVNLTNVNLEEPTPAPPTSHVSQADCLGAPSPEAPHTMLRDEGVSLPSHVDPAKVYRKEPYPEEMMRQNHILKQPALGHPGQRLDKEPNPAYDPQLPYVEKQASRDLEQPPYRYESSSYTDQFSRNYDHRLRFEDRVPTYEDQWSYYDDKQPYPTRPFDTQHPRDLDSRQHPEEASERGYFQRFEEPAPLPYDSRPRYEQLPRTSTLRHEEQPTSGYEVHNRYRPEAQPYAPAGPKSSEPKQYFDQYPRSYEQVPPPGFTSKTGHYEPLHGAAVVPPLIPSSQHKPEVLPSATKPQPPPPALTEEEEDPAMKPQSVLTRVKMFENKRSASLENKKDVNDTASFKPPEVASKPPSASLVGPKPVSQTQFSEHDKTLYRLPEPQKPQAKPPEDIVRSNHYDPEEDEEYYRKQLSYFDRRSFESKPPAHIPAGHHSEPAKPVHSQSQPNFSSYSSKGKPETDAMDRSFSEKRYDPTQAMPPPPPLPSQYSQPVPPLSNSSLHIHSKAAQSEGNSVSLDFQNSYISKPDPPPSQSKPATFRPPTREDPPQTFYPQKSFPDKASVNGAEQTQKTITPAYNRFTPKPYTSSARPFERKFESPKFNHNLLPSETVHKPELSSKPPPSPKTLMKAHSSTQPPEFDSGVETFSVHTDKPKYQINNISTMPKAVPVSPSAVEEDEDEDGHTVVATARGIFNSNGGVLSSIETGVSIIIPQGAIPEGIEQEIYFKVCRDNSILPPLDKEKGETLLSPLVMCGPHGLKFLKPVELRLPHCASMTPDGWSFALKSSDSSSGDPKTWQNKCLPGDPNYLVGANCVSVLIDHF.

In terms of domain architecture, PDZ 1 spans 23–110 (TVTLHRAPGF…NAKITIRRKK (88 aa)). A compositionally biased stretch (basic residues) spans 102–112 (AKITIRRKKKV). The segment at 102-189 (AKITIRRKKK…QPAKPTKVTL (88 aa)) is disordered. A compositionally biased stretch (acidic residues) spans 123 to 136 (PVSDNEDDSYDEDV). Phosphoserine is present on S125. Position 132 is a phosphotyrosine (Y132). Over residues 149–175 (RRGEKSWARDRSASRDRSLSPRSDRRS) the composition is skewed to basic and acidic residues. S175, S178, and S179 each carry phosphoserine. T185 carries the post-translational modification Phosphothreonine. A PDZ 2 domain is found at 186–264 (KVTLVKSRKN…KLKMVVQRDE (79 aa)). A phosphoserine mark is found at S212 and S241. At T267 the chain carries Phosphothreonine. S275, S277, S280, S284, S290, S294, S297, S300, S323, S329, S334, S337, and S353 each carry phosphoserine. The tract at residues 296-363 (ASDHSVRSHD…TPVKHVDDHT (68 aa)) is disordered. The segment covering 299–308 (HSVRSHDRPP) has biased composition (basic and acidic residues). Positions 325 to 338 (HSTQSPQQPSNGSL) are enriched in polar residues. Phosphothreonine is present on T354. Residues 421 to 502 (SMKLVKFRKG…GEEVTILAQK (82 aa)) form the PDZ 3 domain. An SH3 domain is found at 516-584 (GDSFYIRTHF…PNKNRAEQLA (69 aa)). A phosphoserine mark is found at S617 and S622. An occludin (OCLN)-binding region region spans residues 633-876 (YERVVLREAG…GTPPESAITR (244 aa)). One can recognise a Guanylate kinase-like domain in the interval 690–791 (RLHTIKQIID…WYGALKEAIQ (102 aa)). Phosphothreonine is present on T809. Phosphoserine is present on residues S810 and S821. Y822 carries the phosphotyrosine modification. Phosphoserine is present on residues S824, S828, and S837. Disordered stretches follow at residues 825 to 941 (APGS…PASS) and 1023 to 1042 (ALGH…YDPQ). Phosphothreonine is present on residues T846, T848, T854, T861, and T868. Basic and acidic residues predominate over residues 879 to 892 (EPVREDSSGMHHEN). Residues 893-906 (QTYPPYSPQAQPQA) are compositionally biased toward low complexity. Phosphoserine is present on S912. S1071 bears the Phosphoserine mark. Residues 1092-1585 (SYYDDKQPYP…SSTQPPEFDS (494 aa)) form a disordered region. Residues 1106–1124 (DTQHPRDLDSRQHPEEASE) are compositionally biased toward basic and acidic residues. Residues Y1139 and Y1164 each carry the phosphotyrosine modification. The tract at residues 1150 to 1370 (RTSTLRHEEQ…FDRRSFESKP (221 aa)) is actin-binding region (ABR). Basic and acidic residues-rich tracts occupy residues 1268-1285 (KMFE…KDVN) and 1335-1346 (PPEDIVRSNHYD). Position 1353 is a phosphotyrosine (Y1353). The residue at position 1365 (S1365) is a Phosphoserine. The segment covering 1388 to 1399 (SQSQPNFSSYSS) has biased composition (low complexity). Positions 1401–1418 (GKPETDAMDRSFSEKRYD) are enriched in basic and acidic residues. S1411 carries the post-translational modification Phosphoserine. 2 stretches are compositionally biased toward polar residues: residues 1442–1468 (NSSL…NSYI) and 1509–1519 (GAEQTQKTITP). Over residues 1535–1544 (PFERKFESPK) the composition is skewed to basic and acidic residues. Residues S1542 and S1614 each carry the phosphoserine modification. The ZU5 domain maps to 1631 to 1765 (ATARGIFNSN…NCVSVLIDHF (135 aa)).

It belongs to the MAGUK family. As to quaternary structure, homodimer. Forms heterodimers TJP3. Forms a heterodimer (via PDZ2 domain) with TJP2/ZO2 (via PDZ2 domain). Interacts with OCLN. Interacts with CALM, claudins, CGN/cingulin, CXADR, GJA12, GJD3 and UBN1. Interacts (via ZU5 domain) with CDC42BPB and MYZAP. Interacts (via PDZ domain) with GJA1. Interacts (via PDZ domains) with ANKRD2. Interacts with BVES (via the C-terminus cytoplasmic tail). Interacts with HSPA4. Interacts with KIRREL1. Interacts with DLL1. Interacts with USP53 (via the C-terminal region). Interacts with DNMBP (via C-terminal domain); required for the apical cell-cell junction localization of DNMBP. Interacts with SPEF1. Interacts (via N-terminus) with CTNNA1. Interacts with CLDN18. Interacts with CLDN16 (via TRV motif); this is a prerequisite for anchoring of CLDN16 at the tight junction. Interacts with PKP1; the interaction facilitates TJP1/ZO-1 localization to the plasma membrane. Phosphorylated at tyrosine redidues in response to epidermal growth factor (EGF). This response is dependent on an intact actin microfilament system. Dephosphorylated by Ptprj.

The protein resides in the cell membrane. Its subcellular location is the cell junction. It is found in the tight junction. It localises to the gap junction. In terms of biological role, tjpP1, Tjp2, and Tjp3 are closely related scaffolding proteins that link tight junction (TJ) transmembrane proteins such as claudins, junctional adhesion molecules, and occludin to the actin cytoskeleton. The tight junction acts to limit movement of substances through the paracellular space and as a boundary between the compositionally distinct apical and basolateral plasma membrane domains of epithelial and endothelial cells. Necessary for lumenogenesis, and particularly efficient epithelial polarization and barrier formation. Plays a role in the regulation of cell migration by targeting Cdc42bpb to the leading edge of migrating cells. Plays an important role in podosome formation and associated function, thus regulating cell adhesion and matrix remodeling. With Tjp2 and Tjp3, participates in the junctional retention and stability of the transcription factor Dbpa, but is not involved in its shuttling to the nucleus. May play a role in mediating cell morphology changes during ameloblast differentiation via its role in tight junctions. In Rattus norvegicus (Rat), this protein is Tight junction protein ZO-1.